Reading from the N-terminus, the 483-residue chain is Glutamyl-tRNA(Gln) amidotransferase subunit A (483 aa).

Active-site charge relay system residues include lysine 77 and serine 152. Catalysis depends on serine 176, which acts as the Acyl-ester intermediate.

It belongs to the amidase family. GatA subfamily. In terms of assembly, heterotrimer of A, B and C subunits.

The enzyme catalyses L-glutamyl-tRNA(Gln) + L-glutamine + ATP + H2O = L-glutaminyl-tRNA(Gln) + L-glutamate + ADP + phosphate + H(+). Functionally, allows the formation of correctly charged Gln-tRNA(Gln) through the transamidation of misacylated Glu-tRNA(Gln) in organisms which lack glutaminyl-tRNA synthetase. The reaction takes place in the presence of glutamine and ATP through an activated gamma-phospho-Glu-tRNA(Gln). The protein is Glutamyl-tRNA(Gln) amidotransferase subunit A of Listeria monocytogenes serotype 4b (strain F2365).